The sequence spans 230 residues: TPR repeat-containing protein BB_0298 (230 aa).

TPR repeat units lie at residues 69–102 (ARFFNLIGLEFFKLGQYGPAIEYFAKNLEINPNN) and 183–216 (FEFLMLRGANYYSLGDLGNAILFYDKASKKASTE).

The chain is TPR repeat-containing protein BB_0298 from Borreliella burgdorferi (strain ATCC 35210 / DSM 4680 / CIP 102532 / B31) (Borrelia burgdorferi).